Reading from the N-terminus, the 297-residue chain is tRNA (guanine-N(7)-)-methyltransferase (297 aa).

4 residues coordinate S-adenosyl-L-methionine: Glu22, Glu47, Asp74, and Asp97. Residue Asp97 is part of the active site. Substrate contacts are provided by residues Lys101, Asp133, and 165–168; that span reads TKYE.

It belongs to the class I-like SAM-binding methyltransferase superfamily. TrmB family.

It carries out the reaction guanosine(46) in tRNA + S-adenosyl-L-methionine = N(7)-methylguanosine(46) in tRNA + S-adenosyl-L-homocysteine. It participates in tRNA modification; N(7)-methylguanine-tRNA biosynthesis. Functionally, catalyzes the formation of N(7)-methylguanine at position 46 (m7G46) in tRNA. This Aquifex aeolicus (strain VF5) protein is tRNA (guanine-N(7)-)-methyltransferase.